The chain runs to 513 residues: Xyloglucan 6-xylosyltransferase 4 (513 aa).

Residues 1–39 (MFQDGSRSSGSGRGLSTTAVSNGGWRTRGFLRGWQIQNT) lie on the Cytoplasmic side of the membrane. Residues 40-60 (LFNNIKFMILCCFVTILILLG) traverse the membrane as a helical; Signal-anchor for type II membrane protein segment. The Lumenal portion of the chain corresponds to 61-513 (TIRVGNLGSS…IRRMHMETKP (453 aa)). Residues Asn-76, Asn-110, Asn-142, Asn-174, and Asn-490 are each glycosylated (N-linked (GlcNAc...) asparagine).

It belongs to the glycosyltransferase 34 family.

It is found in the golgi apparatus membrane. The enzyme catalyses Transfers an alpha-D-xylosyl residue from UDP-D-xylose to a glucose residue in xyloglucan, forming an alpha-(1-&gt;6)-D-xylosyl-D-glucose linkage.. Its function is as follows. Xylosyltransferase specific to UDP-D-xylose that accepts cellohexaose as substrate to produce xyloglucan. The polypeptide is Xyloglucan 6-xylosyltransferase 4 (Arabidopsis thaliana (Mouse-ear cress)).